A 509-amino-acid chain; its full sequence is Sperm-associated antigen 6 (509 aa).

8 ARM repeats span residues 31-70 (PQNI…RLAN), 73-112 (DDLA…AVGK), 115-154 (PQLA…YIAR), 157-196 (AELS…DIAK), 199-238 (PELA…QVSK), 241-280 (VDLA…EIAK), 325-365 (ENLA…QIGR), and 368-409 (PEHA…NILQ).

In terms of assembly, interacts with SPAG16 and SPAG17. Highly expressed in testis.

The protein resides in the cytoplasm. Its subcellular location is the cytoskeleton. It localises to the cell projection. The protein localises to the cilium. It is found in the flagellum. The protein resides in the cilium axoneme. Functionally, important for structural integrity of the central apparatus in the sperm tail and for flagellar motility. The polypeptide is Sperm-associated antigen 6 (SPAG6) (Homo sapiens (Human)).